Consider the following 335-residue polypeptide: Acetyl-coenzyme A carboxylase carboxyl transferase subunit alpha (335 aa).

Residues 40–294 form the CoA carboxyltransferase C-terminal domain; sequence QLETLAARRR…KEAIEKHLNA (255 aa).

This sequence belongs to the AccA family. Acetyl-CoA carboxylase is a heterohexamer composed of biotin carboxyl carrier protein (AccB), biotin carboxylase (AccC) and two subunits each of ACCase subunit alpha (AccA) and ACCase subunit beta (AccD).

It is found in the cytoplasm. The catalysed reaction is N(6)-carboxybiotinyl-L-lysyl-[protein] + acetyl-CoA = N(6)-biotinyl-L-lysyl-[protein] + malonyl-CoA. It participates in lipid metabolism; malonyl-CoA biosynthesis; malonyl-CoA from acetyl-CoA: step 1/1. Its function is as follows. Component of the acetyl coenzyme A carboxylase (ACC) complex. First, biotin carboxylase catalyzes the carboxylation of biotin on its carrier protein (BCCP) and then the CO(2) group is transferred by the carboxyltransferase to acetyl-CoA to form malonyl-CoA. This chain is Acetyl-coenzyme A carboxylase carboxyl transferase subunit alpha, found in Prochlorococcus marinus (strain AS9601).